The primary structure comprises 82 residues: MYHQEQHPVGAPPPQGYPPKDGYPPAGYPPAGYPPPGYAQGYPAQGYPPPQYSQAPQQKQNAGMLEGCLAALCCCCLLDACF.

A disordered region spans residues M1–Q58. Residues A26–G37 show a composition bias toward pro residues. Residues K59–C76 form a helical membrane-spanning segment.

Belongs to the CYSTM1 family. In terms of assembly, homodimer and heterodimers. Interacts with CYSTM7, CYTSM3, CYTSM4, CYTSM5, CYTSM6, CYTSM9, CYTSM10 and CYTSM11. Binds weakly to CYSTM1 and CYSTM2. In terms of tissue distribution, expressed in root meristem, root vasculature, leaf vasculature and floral organ primordia. Mostly expressed in roots and flowers and, to a lower extent, in stems, siliques and leaves.

It localises to the cell membrane. Required for the promotion of megasporogenesis, or promotion of germ cell formation from somatic precursor cells. Acts redundantly with WIH2. Functions in a genetic pathway downstream of SPL/NZZ and WUS and together with TRN2 in promoting megasporogenesis. Involved in resistance to abiotic stress. This chain is Protein CYSTEINE-RICH TRANSMEMBRANE MODULE 13, found in Arabidopsis thaliana (Mouse-ear cress).